We begin with the raw amino-acid sequence, 623 residues long: Protein vein (623 aa).

The N-terminal stretch at 1–40 (MYAQHLRKWSLKTKKQLMPLILLIISYMLLLNTCVLSSSA) is a signal peptide. 4 disordered regions span residues 70 to 98 (IPLSSDNGSGSSESSAESGSSSSRSSSNN), 130 to 162 (DAGSSTPAQQEQHVAAVPEQQQQQQQQQQSMQK), 184 to 214 (AASSKMRRHIQPSQLPHQPESRAQLPSNYSS), and 229 to 317 (PESM…QRYN). 2 stretches are compositionally biased toward low complexity: residues 72–98 (LSSDNGSGSSESSAESGSSSSRSSSNN) and 136–158 (PAQQEQHVAAVPEQQQQQQQQQQ). N-linked (GlcNAc...) asparagine glycosylation is present at Asn-76. Asn-211 carries N-linked (GlcNAc...) asparagine glycosylation. Over residues 233-248 (LEDRSPEQAARSRRDG) the composition is skewed to basic and acidic residues. The N-linked (GlcNAc...) asparagine glycan is linked to Asn-252. A compositionally biased stretch (low complexity) spans 255–267 (RQQQRTGHRQQLQ). The segment covering 305–316 (QRRKHQRKHQRY) has biased composition (basic residues). 6 N-linked (GlcNAc...) asparagine glycosylation sites follow: Asn-350, Asn-381, Asn-424, Asn-449, Asn-521, and Asn-574. One can recognise an Ig-like C2-type domain in the interval 457-542 (TKIFSKPSKA…AKNKASKAIA (86 aa)). 4 cysteine pairs are disulfide-bonded: Cys-478-Cys-531, Cys-566-Cys-577, Cys-571-Cys-588, and Cys-590-Cys-599. An EGF-like domain is found at 561–599 (ASGIPCNFDYCFHNGTCRMIPDINEVYCRCPTEYFGNRC).

Its subcellular location is the secreted. Ligand for the EGF receptor. Seems to play a role in the global proliferation of wing disc cells and the larval patterning. Shows a strong synergistic genetic interaction with spi, suggesting a molecular interdependence. Required for the development of interveins cells. In Drosophila melanogaster (Fruit fly), this protein is Protein vein (vn).